Reading from the N-terminus, the 96-residue chain is MNINEDSLQKIAELSRLKIRSEEKEATLQDFNKILEYVDQIKGLDVSSIKDDEIYLHHENAIRPDLAGKHLSREEIESFAPSFQNGYFVVPKVIET.

The protein belongs to the GatC family. Heterotrimer of A, B and C subunits.

The enzyme catalyses L-glutamyl-tRNA(Gln) + L-glutamine + ATP + H2O = L-glutaminyl-tRNA(Gln) + L-glutamate + ADP + phosphate + H(+). It catalyses the reaction L-aspartyl-tRNA(Asn) + L-glutamine + ATP + H2O = L-asparaginyl-tRNA(Asn) + L-glutamate + ADP + phosphate + 2 H(+). Its function is as follows. Allows the formation of correctly charged Asn-tRNA(Asn) or Gln-tRNA(Gln) through the transamidation of misacylated Asp-tRNA(Asn) or Glu-tRNA(Gln) in organisms which lack either or both of asparaginyl-tRNA or glutaminyl-tRNA synthetases. The reaction takes place in the presence of glutamine and ATP through an activated phospho-Asp-tRNA(Asn) or phospho-Glu-tRNA(Gln). This Leptospira interrogans serogroup Icterohaemorrhagiae serovar copenhageni (strain Fiocruz L1-130) protein is Aspartyl/glutamyl-tRNA(Asn/Gln) amidotransferase subunit C.